The primary structure comprises 437 residues: 3-phosphoshikimate 1-carboxyvinyltransferase (437 aa).

3 residues coordinate 3-phosphoshikimate: Lys21, Ser22, and Arg26. A phosphoenolpyruvate-binding site is contributed by Lys21. Phosphoenolpyruvate-binding residues include Gly101 and Arg129. Residues Ser172, Ser173, Gln174, Ser200, Asp314, and Lys341 each coordinate 3-phosphoshikimate. Gln174 lines the phosphoenolpyruvate pocket. Asp314 (proton acceptor) is an active-site residue. The phosphoenolpyruvate site is built by Arg345, Arg388, and Lys414.

Belongs to the EPSP synthase family. Monomer.

It is found in the cytoplasm. It carries out the reaction 3-phosphoshikimate + phosphoenolpyruvate = 5-O-(1-carboxyvinyl)-3-phosphoshikimate + phosphate. The protein operates within metabolic intermediate biosynthesis; chorismate biosynthesis; chorismate from D-erythrose 4-phosphate and phosphoenolpyruvate: step 6/7. Functionally, catalyzes the transfer of the enolpyruvyl moiety of phosphoenolpyruvate (PEP) to the 5-hydroxyl of shikimate-3-phosphate (S3P) to produce enolpyruvyl shikimate-3-phosphate and inorganic phosphate. This Clostridioides difficile (strain 630) (Peptoclostridium difficile) protein is 3-phosphoshikimate 1-carboxyvinyltransferase.